The sequence spans 2473 residues: Neurogenic locus notch homolog protein 2 (2473 aa).

Positions 1-25 (MPALRPAALRALLWLWLCGAGPAHA) are cleaved as a signal peptide. EGF-like domains are found at residues 26–63 (LQCR…EYCQ), 64–102 (HRDP…EDCQ), 105–143 (TSHP…KQCQ), and 144–180 (WTDA…QKCE). Residues 26 to 1679 (LQCRGGQEPC…SELESPRNAQ (1654 aa)) lie on the Extracellular side of the membrane. 83 disulfides stabilise this stretch: Cys-28–Cys-41, Cys-35–Cys-51, Cys-53–Cys-62, Cys-68–Cys-79, Cys-73–Cys-90, Cys-92–Cys-101, Cys-109–Cys-121, Cys-115–Cys-131, Cys-133–Cys-142, Cys-148–Cys-159, Cys-153–Cys-168, Cys-170–Cys-179, Cys-186–Cys-198, Cys-192–Cys-207, Cys-209–Cys-218, Cys-230–Cys-246, Cys-248–Cys-257, Cys-264–Cys-275, Cys-269–Cys-284, Cys-286–Cys-295, Cys-302–Cys-315, Cys-309–Cys-324, Cys-326–Cys-335, Cys-342–Cys-353, Cys-347–Cys-362, Cys-364–Cys-373, Cys-379–Cys-390, Cys-384–Cys-401, Cys-403–Cys-412, Cys-419–Cys-433, Cys-427–Cys-442, Cys-444–Cys-453, Cys-460–Cys-471, Cys-465–Cys-480, Cys-482–Cys-491, Cys-498–Cys-509, Cys-503–Cys-518, Cys-520–Cys-529, Cys-536–Cys-547, Cys-541–Cys-556, Cys-558–Cys-567, Cys-574–Cys-584, Cys-579–Cys-593, Cys-595–Cys-604, Cys-611–Cys-622, Cys-616–Cys-631, Cys-633–Cys-642, Cys-649–Cys-659, Cys-654–Cys-668, Cys-670–Cys-679, Cys-686–Cys-697, Cys-691–Cys-706, Cys-708–Cys-717, Cys-724–Cys-734, Cys-729–Cys-743, Cys-745–Cys-754, Cys-761–Cys-772, Cys-766–Cys-781, Cys-783–Cys-792, Cys-799–Cys-810, Cys-804–Cys-819, Cys-821–Cys-830, Cys-837–Cys-848, Cys-842–Cys-859, Cys-861–Cys-870, Cys-877–Cys-888, Cys-882–Cys-897, Cys-899–Cys-908, Cys-915–Cys-926, Cys-920–Cys-935, Cys-937–Cys-946, Cys-953–Cys-964, Cys-958–Cys-973, Cys-975–Cys-984, Cys-991–Cys-1002, Cys-996–Cys-1011, Cys-1013–Cys-1022, Cys-1029–Cys-1040, Cys-1034–Cys-1049, Cys-1051–Cys-1060, Cys-1067–Cys-1078, Cys-1072–Cys-1087, and Cys-1089–Cys-1098. The N-linked (GlcNAc...) asparagine glycan is linked to Asn-46. N-linked (GlcNAc...) asparagine glycosylation is present at Asn-155. An EGF-like 5; calcium-binding domain is found at 182–219 (DINECDIPGRCQHGGTCLNLPGSYRCQCPQGFTGQHCD). The 38-residue stretch at 221–258 (PYVPCAPSPCVNGGTCRQTGDFTFECNCLPGFEGSTCE) folds into the EGF-like 6; incomplete domain. The EGF-like 7; calcium-binding domain occupies 260–296 (NIDDCPNHKCQNGGVCVDGVNTYNCRCPPQWTGQFCT). The 39-residue stretch at 298 to 336 (DVDECLLQPNACQNGGTCTNRNGGYGCVCVNGWSGDDCS) folds into the EGF-like 8; calcium-binding domain. An EGF-like 9; calcium-binding domain is found at 338–374 (NIDDCAYASCTPGSTCIDRVASFSCLCPEGKAGLLCH). Positions 375-413 (LDDACISNPCHKGALCDTNPLNGQYICTCPQGYKGADCT) constitute an EGF-like 10 domain. In terms of domain architecture, EGF-like 11; calcium-binding spans 415-454 (DVDECAMANSNPCEHAGKCVNTDGAFHCECLKGYAGPRCE). One can recognise an EGF-like 12; calcium-binding domain in the interval 456-492 (DINECHSDPCQNDATCLDKIGGFTCLCMPGFKGVHCE). The EGF-like 13; calcium-binding domain occupies 494–530 (EVNECQSNPCVNNGQCVDKVNRFQCLCPPGFTGPVCQ). In terms of domain architecture, EGF-like 14; calcium-binding spans 532 to 568 (DIDDCSSTPCLNGAKCIDHPNGYECQCATGFTGILCD). Positions 570–605 (NIDNCDPDPCHHGQCQDGIDSYTCICNPGYMGAICS) constitute an EGF-like 15; calcium-binding domain. The region spanning 607-643 (QIDECYSSPCLNDGRCIDLVNGYQCNCQPGTSGLNCE) is the EGF-like 16; calcium-binding domain. O-linked (Glc...) serine; alternate glycosylation is present at Ser-613. Ser-613 is a glycosylation site (O-linked (Xyl...) serine; alternate). The EGF-like 17; calcium-binding domain maps to 645–680 (NFDDCASNPCMHGVCVDGINRYSCVCSPGFTGQRCN). Residues 682 to 718 (DIDECASNPCRKGATCINDVNGFRCICPEGPHHPSCY) enclose the EGF-like 18; calcium-binding domain. The 36-residue stretch at 720-755 (QVNECLSNPCIHGNCTGGLSGYKCLCDAGWVGVNCE) folds into the EGF-like 19 domain. The N-linked (GlcNAc...) asparagine glycan is linked to Asn-733. The EGF-like 20; calcium-binding domain occupies 757-793 (DKNECLSNPCQNGGTCNNLVNGYRCTCKKGFKGYNCQ). The 37-residue stretch at 795 to 831 (NIDECASNPCLNQGTCFDDVSGYTCHCMLPYTGKNCQ) folds into the EGF-like 21; calcium-binding domain. The EGF-like 22 domain maps to 833–871 (VLAPCSPNPCENAAVCKEAPNFESFSCLCAPGWQGKRCT). Positions 873 to 909 (DVDECISKPCMNNGVCHNTQGSYVCECPPGFSGMDCE) constitute an EGF-like 23; calcium-binding domain. The 37-residue stretch at 911-947 (DINDCLANPCQNGGSCVDHVNTFSCQCHPGFIGDKCQ) folds into the EGF-like 24; calcium-binding domain. An EGF-like 25; calcium-binding domain is found at 949–985 (DMNECLSEPCKNGGTCSDYVNSYTCTCPAGFHGVHCE). The EGF-like 26; calcium-binding domain maps to 987–1023 (NIDECTESSCFNGGTCVDGINSFSCLCPVGFTGPFCL). The region spanning 1025-1061 (DINECSSNPCLNAGTCVDGLGTYRCICPLGYTGKNCQ) is the EGF-like 27; calcium-binding domain. 2 consecutive EGF-like domains span residues 1063–1099 (LVNL…AYCD) and 1101–1147 (LNVS…SYCE). Asn-1102 carries N-linked (GlcNAc...) asparagine glycosylation. Intrachain disulfides connect Cys-1105/Cys-1126, Cys-1120/Cys-1135, Cys-1137/Cys-1146, Cys-1153/Cys-1164, Cys-1158/Cys-1173, Cys-1175/Cys-1184, Cys-1191/Cys-1202, Cys-1196/Cys-1211, Cys-1213/Cys-1222, Cys-1229/Cys-1241, Cys-1235/Cys-1250, Cys-1252/Cys-1261, Cys-1268/Cys-1281, Cys-1273/Cys-1290, Cys-1292/Cys-1301, Cys-1308/Cys-1319, Cys-1313/Cys-1331, Cys-1333/Cys-1346, Cys-1378/Cys-1389, Cys-1383/Cys-1400, Cys-1402/Cys-1411, Cys-1425/Cys-1448, Cys-1430/Cys-1443, and Cys-1439/Cys-1455. In terms of domain architecture, EGF-like 30; calcium-binding spans 1149–1185 (QLDECASNPCQHGATCNDFIGGYRCECVPGYQGVNCE). The EGF-like 31; calcium-binding domain occupies 1187–1223 (EVDECQNQPCQNGGTCIDLVNHFKCSCPPGTRGLLCE). Residues 1225 to 1262 (NIDECAGGPHCLNGGQCVDRIGGYTCRCLPGFAGERCE) form the EGF-like 32; calcium-binding domain. 3 consecutive EGF-like domains span residues 1264 to 1302 (DINE…RHCE), 1304 to 1343 (FLDV…ARCQ), and 1375 to 1412 (ESGC…SHCE). LNR repeat units follow at residues 1425–1465 (CQSQ…PWAN), 1466–1502 (CTST…NSKT), and 1503–1544 (CKYD…NLAE). Residues 1425–1679 (CQSQYCADKA…SELESPRNAQ (255 aa)) form a negative regulatory region (NRR) region. Residue Asn-1465 is glycosylated (N-linked (GlcNAc...) asparagine). 7 cysteine pairs are disulfide-bonded: Cys-1466–Cys-1489, Cys-1472–Cys-1484, Cys-1480–Cys-1496, Cys-1503–Cys-1527, Cys-1509–Cys-1522, Cys-1518–Cys-1534, and Cys-1634–Cys-1641. Residues 1680-1700 (LLYLLAVAVVIILFFILLGVI) form a helical membrane-spanning segment. Residues 1701-2473 (MAKRKRKHGF…PPHSNMQVYA (773 aa)) are Cytoplasmic-facing. Phosphothreonine is present on Thr-1718. A disordered region spans residues 1755-1778 (GTSEHWVDDEGPQPKKAKAEDEAL). At Ser-1780 the chain carries Phosphoserine. A Phosphothreonine modification is found at Thr-1803. Phosphoserine is present on Ser-1805. Thr-1809 is subject to Phosphothreonine. ANK repeat units follow at residues 1828–1872 (DGCT…SLQA), 1877–1906 (TGEM…DANA), 1910–1940 (MGRC…DLDA), 1944–1973 (DGTT…DVNA), 1977–2006 (HGKS…NRDM), and 2010–2039 (KEET…NRDI). A phosphoserine mark is found at Ser-1843 and Ser-1846. A phosphoserine mark is found at Ser-2071, Ser-2079, and Ser-2082. Thr-2098 carries the phosphothreonine modification. 3 disordered regions span residues 2098-2117 (TPMG…PTSL), 2122-2169 (KEAK…TSSP), and 2382-2473 (VGKY…QVYA). The segment covering 2099–2108 (PMGKKARRPN) has biased composition (basic residues). Composition is skewed to polar residues over residues 2140–2151 (VQLSESSVTLSP) and 2390–2400 (SQHSYASSNAA). The segment covering 2419-2446 (PSPESPDQWSSSSPHSASDWSDVTTSPT) has biased composition (low complexity). The span at 2447-2456 (PGGGGGGQRG) shows a compositional bias: gly residues.

The protein belongs to the NOTCH family. In terms of assembly, heterodimer of a C-terminal fragment N(TM) and an N-terminal fragment N(EC) which are probably linked by disulfide bonds. Interacts with MAML1, MAML2 and MAML3 which act as transcriptional coactivators for NOTCH2. Interacts with RELA/p65. Interacts with HIF1AN. Interacts (via ANK repeats) with TCIM, the interaction inhibits the nuclear translocation of NOTCH2 N2ICD. Interacts with CUL1, RBX1, SKP1 and FBXW7 that are SCF(FBXW7) E3 ubiquitin-protein ligase complex components. Interacts with MINAR1; this interaction increases MINAR1 stability and function. Interacts with MDK; this interaction mediates a nuclear accumulation of NOTCH2 and therefore activation of NOTCH2 signaling leading to interaction between HES1 and STAT3. Interacts with MINAR2. Synthesized in the endoplasmic reticulum as an inactive form which is proteolytically cleaved by a furin-like convertase in the trans-Golgi network before it reaches the plasma membrane to yield an active, ligand-accessible form. Cleavage results in a C-terminal fragment N(TM) and a N-terminal fragment N(EC). Following ligand binding, it is cleaved by TNF-alpha converting enzyme (TACE) to yield a membrane-associated intermediate fragment called notch extracellular truncation (NEXT). This fragment is then cleaved by presenilin dependent gamma-secretase to release a notch-derived peptide containing the intracellular domain (NICD) from the membrane. In terms of processing, hydroxylated by HIF1AN. Post-translationally, can be either O-glucosylated or O-xylosylated at Ser-613 by POGLUT1. Phosphorylated by GSK3. GSK3-mediated phosphorylation is necessary for NOTCH2 recognition by FBXW7, ubiquitination and degradation via the ubiquitin proteasome pathway. In terms of tissue distribution, expressed in the brain, liver, kidney, neuroepithelia, somites, optic vesicles and branchial arches, but not heart.

The protein resides in the cell membrane. Its subcellular location is the nucleus. It is found in the cytoplasm. Functions as a receptor for membrane-bound ligands Jagged-1 (JAG1), Jagged-2 (JAG2) and Delta-1 (DLL1) to regulate cell-fate determination. Upon ligand activation through the released notch intracellular domain (NICD) it forms a transcriptional activator complex with RBPJ/RBPSUH and activates genes of the enhancer of split locus. Affects the implementation of differentiation, proliferation and apoptotic programs. May play an essential role in postimplantation development, probably in some aspect of cell specification and/or differentiation. In collaboration with RELA/p65 enhances NFATc1 promoter activity and positively regulates RANKL-induced osteoclast differentiation. Positively regulates self-renewal of liver cancer cells. The sequence is that of Neurogenic locus notch homolog protein 2 from Mus musculus (Mouse).